The primary structure comprises 198 residues: Sporulation-specific protein 16 (198 aa).

Functionally, necessary for efficient spore formation. The protein is Sporulation-specific protein 16 (SPO16) of Saccharomyces cerevisiae (strain ATCC 204508 / S288c) (Baker's yeast).